Here is a 130-residue protein sequence, read N- to C-terminus: Nascent polypeptide-associated complex protein (130 aa).

The NAC-A/B domain occupies 6–74 (GMNPRKMQQM…PVERDAADAI (69 aa)). A disordered region spans residues 65–91 (PVERDAADAIEAAPADDSDDTDDDDAI). Positions 78-90 (PADDSDDTDDDDA) are enriched in acidic residues.

Belongs to the NAC-alpha family. In terms of assembly, homodimer. Interacts with the ribosome. Binds ribosomal RNA.

Contacts the emerging nascent chain on the ribosome. This chain is Nascent polypeptide-associated complex protein, found in Halobacterium salinarum (strain ATCC 700922 / JCM 11081 / NRC-1) (Halobacterium halobium).